The sequence spans 729 residues: Cellulose synthase catalytic subunit [UDP-forming] (729 aa).

The next 3 helical transmembrane spans lie at 30 to 50 (LATW…VAVP), 110 to 130 (FILG…LVLG), and 171 to 191 (TTVL…IHLL). A catalytic subdomain A region spans residues 151 to 244 (LWPSVDVFIP…YVAIFDCDHI (94 aa)). Aspartate 193 is a catalytic residue. Substrate-binding residues include aspartate 240 and aspartate 242. The interval 321–381 (TALEEVGGVA…AQRIRWARGM (61 aa)) is catalytic subdomain B. Aspartate 337 is a catalytic residue. 5 consecutive transmembrane segments (helical) span residues 405–425 (LNAM…TAPL), 427–447 (YLFF…AYAL), 520–540 (LFLL…LIYV), 549–569 (IWFN…TIAT), and 610–630 (MAIM…QIGL). The PilZ domain occupies 575–671 (QVRSAHRVPL…QERWLVASTF (97 aa)).

It belongs to the glycosyltransferase 2 family. The cofactor is Mg(2+).

The protein resides in the cell inner membrane. It carries out the reaction [(1-&gt;4)-beta-D-glucosyl](n) + UDP-alpha-D-glucose = [(1-&gt;4)-beta-D-glucosyl](n+1) + UDP + H(+). The protein operates within glycan metabolism; bacterial cellulose biosynthesis. Activated by bis-(3'-5') cyclic diguanylic acid (c-di-GMP). Catalytic subunit of cellulose synthase. It polymerizes uridine 5'-diphosphate glucose to cellulose, which is produced as an extracellular component for mechanical and chemical protection. The sequence is that of Cellulose synthase catalytic subunit [UDP-forming] (bcsA) from Xanthomonas axonopodis pv. citri (strain 306).